A 489-amino-acid polypeptide reads, in one-letter code: Adenosylhomocysteinase (489 aa).

Substrate is bound by residues Thr68, Asp151, and Glu213. 214–216 (TTT) contacts NAD(+). Residues Lys243 and Asp247 each contribute to the substrate site. NAD(+) contacts are provided by residues Asn248, 277-282 (GYGDVG), Glu300, Asn335, 356-358 (IGH), and Asn403.

It belongs to the adenosylhomocysteinase family. The cofactor is NAD(+).

It localises to the cytoplasm. It catalyses the reaction S-adenosyl-L-homocysteine + H2O = L-homocysteine + adenosine. Its pathway is amino-acid biosynthesis; L-homocysteine biosynthesis; L-homocysteine from S-adenosyl-L-homocysteine: step 1/1. May play a key role in the regulation of the intracellular concentration of adenosylhomocysteine. This is Adenosylhomocysteinase from Mycobacterium sp. (strain KMS).